The following is a 427-amino-acid chain: Ribose-phosphate pyrophosphokinase 1 (427 aa).

Asp128, His130, and Asp143 together coordinate Mg(2+). Phosphoserine is present on residues Ser199, Ser218, Ser271, and Ser295.

It belongs to the ribose-phosphate pyrophosphokinase family.

The protein resides in the cytoplasm. It catalyses the reaction D-ribose 5-phosphate + ATP = 5-phospho-alpha-D-ribose 1-diphosphate + AMP + H(+). It functions in the pathway metabolic intermediate biosynthesis; 5-phospho-alpha-D-ribose 1-diphosphate biosynthesis; 5-phospho-alpha-D-ribose 1-diphosphate from D-ribose 5-phosphate (route I): step 1/1. 5-phosphoribose 1-diphosphate synthase involved in nucleotide, histidine, and tryptophan biosynthesis. Active in heteromultimeric complexes with other 5-phosphoribose 1-diphosphate synthases (PRS2, PRS3, PRS4 and PRS5). The polypeptide is Ribose-phosphate pyrophosphokinase 1 (PRS1) (Saccharomyces cerevisiae (strain ATCC 204508 / S288c) (Baker's yeast)).